A 609-amino-acid polypeptide reads, in one-letter code: Albumin (609 aa).

An N-terminal signal peptide occupies residues 1 to 18 (MKWVTFISLLFLFSSAYS). Positions 19–24 (RGVFRR) are excised as a propeptide. Albumin domains are found at residues 19–210 (RGVF…DELR), 211–403 (DEGK…EFKP), and 404–601 (LVEE…KLVA). His-27 is a Cu cation binding site. Ser-29 carries the post-translational modification Phosphoserine; by FAM20C. Position 30 (Glu-30) interacts with Ca(2+). Lys-36 carries an N-linked (Glc) (glycation) lysine glycan. Asp-37 is a binding site for Ca(2+). Residue Lys-75 is glycosylated (N-linked (Glc) (glycation) lysine; in vitro). A disulfide bond links Cys-77 and Cys-86. Phosphoserine; by FAM20C is present on residues Ser-82 and Ser-89. His-91 provides a ligand contact to Zn(2+). 4 cysteine pairs are disulfide-bonded: Cys-99–Cys-115, Cys-114–Cys-125, Cys-148–Cys-193, and Cys-192–Cys-201. Thr-107 bears the Phosphothreonine; by FAM20C mark. Lys-161 and Lys-186 each carry an N-linked (Glc) (glycation) lysine; in vitro glycan. An N-linked (Glc) (glycation) lysine; in vitro glycan is attached at Lys-223. 2 disulfides stabilise this stretch: Cys-224–Cys-270 and Cys-269–Cys-277. Lys-229 carries the post-translational modification N6-succinyllysine. An N-linked (Glc) (glycation) lysine; in vitro glycan is attached at Lys-249. The N-linked (Glc) (glycation) lysine glycan is linked to Lys-257. Residue Lys-264 coordinates (4Z,15Z)-bilirubin IXalpha. Ca(2+) is bound at residue Glu-268. Zn(2+) contacts are provided by His-271 and Asp-273. Ca(2+) contacts are provided by Asp-273, Glu-276, Asp-279, and Asp-283. 2 disulfide bridges follow: Cys-289–Cys-303 and Cys-302–Cys-313. Ser-297 bears the Phosphoserine mark. An N-linked (Glc) (glycation) lysine; in vitro glycan is attached at Lys-300. N-linked (Glc) (glycation) lysine glycosylation occurs at Lys-305. Lys-337 carries N-linked (Glc) (glycation) lysine; in vitro glycosylation. Intrachain disulfides connect Cys-340–Cys-385 and Cys-384–Cys-393. N-linked (Glc) (glycation) lysine glycosylation is present at Lys-341. Asn-342 is a glycosylation site (N-linked (GlcNAc...) asparagine; in variant Redhill). A glycan (N-linked (Glc) (glycation) lysine; in vitro) is linked at Lys-347. Lys-375 is a glycosylation site (N-linked (Glc) (glycation) lysine). N-linked (Glc) (glycation) lysine; in vitro glycans are attached at residues Lys-402 and Lys-437. 4 disulfides stabilise this stretch: Cys-416/Cys-462, Cys-461/Cys-472, Cys-485/Cys-501, and Cys-500/Cys-511. Residue Ser-443 is modified to Phosphoserine. Phosphothreonine is present on residues Thr-444 and Thr-446. Position 460 is an N6-succinyllysine (Lys-460). Lys-463 carries an N-linked (Glc) (glycation) lysine glycan. Lys-468 carries an N-linked (Glc) (glycation) lysine; in vitro glycan. Ser-513 bears the Phosphoserine mark. Asp-518 carries N-linked (GlcNAc...) asparagine; in variant Casebrook glycosylation. 2 disulfides stabilise this stretch: Cys-538–Cys-583 and Cys-582–Cys-591. Lys-543 bears the N6-succinyllysine mark. Lys-549 carries N-linked (Glc) (glycation) lysine glycosylation. Lys-558 is subject to N6-methyllysine; alternate. Lys-558 carries an N-linked (Glc) (glycation) lysine; alternate glycan. Lys-560 and Lys-569 each carry an N-linked (Glc) (glycation) lysine; in vitro glycan. An N6-succinyllysine modification is found at Lys-588. Residue Lys-597 is glycosylated (N-linked (Glc) (glycation) lysine; in vitro).

The protein belongs to the ALB/AFP/VDB family. As to quaternary structure, interacts with FCGRT; this interaction regulates ALB homeostasis. Interacts with TASOR. In plasma, occurs in a covalently-linked complex with chromophore-bound alpha-1-microglobulin with molar ratio 1:2 and 1:1; this interaction does not prevent fatty acid binding to ALB. Post-translationally, kenitra variant is partially O-glycosylated at Thr-620. It has two new disulfide bonds Cys-600 to Cys-602 and Cys-601 to Cys-606. In terms of processing, glycated in diabetic patients. Phosphorylated by FAM20C in the extracellular medium. Post-translationally, acetylated on Lys-223 by acetylsalicylic acid. As to expression, plasma.

Its subcellular location is the secreted. Functionally, binds water, Ca(2+), Na(+), K(+), fatty acids, hormones, bilirubin and drugs. Its main function is the regulation of the colloidal osmotic pressure of blood. Major zinc transporter in plasma, typically binds about 80% of all plasma zinc. Major calcium and magnesium transporter in plasma, binds approximately 45% of circulating calcium and magnesium in plasma. Potentially has more than two calcium-binding sites and might additionally bind calcium in a non-specific manner. The shared binding site between zinc and calcium at residue Asp-273 suggests a crosstalk between zinc and calcium transport in the blood. The rank order of affinity is zinc &gt; calcium &gt; magnesium. Binds to the bacterial siderophore enterobactin and inhibits enterobactin-mediated iron uptake of E.coli from ferric transferrin, and may thereby limit the utilization of iron and growth of enteric bacteria such as E.coli. Does not prevent iron uptake by the bacterial siderophore aerobactin. The protein is Albumin (ALB) of Homo sapiens (Human).